Reading from the N-terminus, the 63-residue chain is Large ribosomal subunit protein uL30 (63 aa).

The protein belongs to the universal ribosomal protein uL30 family. In terms of assembly, part of the 50S ribosomal subunit.

The protein is Large ribosomal subunit protein uL30 of Coxiella burnetii (strain CbuK_Q154) (Coxiella burnetii (strain Q154)).